Consider the following 127-residue polypeptide: Thioredoxin domain-containing protein 8 (127 aa).

A Thioredoxin domain is found at 2-127; that stretch reads VKRIKNMSEL…QLEKKIQELM (126 aa). C32 and C35 are disulfide-bonded.

This sequence belongs to the thioredoxin family. As to expression, testis-specific. Only expressed during spermiogenesis, prominently in the Golgi apparatus of pachytene spermatocytes and round and elongated spermatids, with a transient localization in the developing acrosome of round spermatids (at protein level).

It localises to the cytoplasm. The protein resides in the golgi apparatus. In terms of biological role, may be required for post-translational modifications of proteins required for acrosomal biogenesis. May act by reducing disulfide bonds within the sperm. The chain is Thioredoxin domain-containing protein 8 (Txndc8) from Mus musculus (Mouse).